A 673-amino-acid polypeptide reads, in one-letter code: Forkhead box protein O3 (673 aa).

The tract at residues 1-153 (MAEAPASPAP…SGQPRKCSSR (153 aa)) is disordered. S30 bears the Phosphoserine; by AMPK mark. Phosphothreonine; by PKB/AKT1 is present on T32. K46 is modified (N6-methyllysine). Residues 57–68 (IPEEEDDEDDED) are compositionally biased toward acidic residues. Over residues 79-89 (IGGGGGSGTLG) the composition is skewed to gly residues. A required for mitochondrial import region spans residues 80-108 (GGGGGSGTLGSGLLLEDSARVLAPGGQDP). At K149 the chain carries N6-methyllysine. A DNA-binding region (fork-head) is located at residues 157–251 (WGNLSYADLI…KSGKAPRRRA (95 aa)). At T179 the chain carries Phosphothreonine; by AMPK. A Phosphoserine; by STK4/MST1 modification is found at S209. A Phosphoserine; by MAPKAPK5 modification is found at S215. K230 carries the post-translational modification N6-methyllysine. The tract at residues 231 to 302 (SSWWIINPDG…GSPTSRSSDE (72 aa)) is disordered. K242 carries the N6-acetyllysine modification. A Nuclear localization signal motif is present at residues 242–259 (KSGKAPRRRAVSMDNSNK). At S253 the chain carries Phosphoserine; by PKB/AKT1 and MAPKAPK5. Basic residues predominate over residues 261–272 (TKSRGRAAKKKA). K262 and K271 each carry N6-methyllysine. A phosphoserine mark is found at S280 and S284. Over residues 283–298 (DSPSQLSKWPGSPTSR) the composition is skewed to polar residues. K290 bears the N6-methyllysine mark. S294 carries the phosphoserine modification. The residue at position 299 (S299) is a Phosphoserine; by CaMK2A. The interval 300–673 (SDELDAWTDF…QASSQSWVPG (374 aa)) is mediates interaction with CHUK/IKKA and IKBKB/IKKB. The residue at position 311 (S311) is a Phosphoserine. S315 carries the post-translational modification Phosphoserine; by SGK1. S399 and S413 each carry phosphoserine; by AMPK. The residue at position 419 (K419) is an N6-methyllysine. At S421 the chain carries Phosphoserine. Residues 536-587 (HQHQTQGALGGSRALSNSVSNMGLSESSSLGSAKHQQQSPVSQSMQTLSDSL) form a disordered region. The segment covering 549–582 (ALSNSVSNMGLSESSSLGSAKHQQQSPVSQSMQT) has biased composition (polar residues). Phosphoserine; by MAPKAPK5 is present on S551. S555 is modified (phosphoserine; by AMPK and MAPKAPK5). 2 positions are modified to phosphoserine; by AMPK: S588 and S626. S644 carries the phosphoserine; by IKKB modification.

In terms of assembly, upon metabolic stress, forms a complex composed of FOXO3, SIRT3 and mitochondrial RNA polymerase POLRMT; the complex is recruited to mtDNA in a SIRT3-dependent manner. Also forms a complex composed of FOXO3, SIRT3, TFAM and POLRMT. Interacts with SIRT2; the interaction occurs independently of SIRT2 deacetylase activity. Interacts with YWHAB/14-3-3-beta and YWHAZ/14-3-3-zeta, which are required for cytosolic sequestration. Upon oxidative stress, interacts with STK4/MST1, which disrupts interaction with YWHAB/14-3-3-beta and leads to nuclear translocation. Interacts with PIM1. Interacts with DDIT3/CHOP. Interacts (deacetylated form) with SKP2. Interacts with CHUK and IKBKB. Interacts with CAMK2A, CAMK2B and calcineurin A. Interacts with NUPR1; this interaction represses FOXO3 transactivation. In terms of processing, in the presence of survival factors such as IGF1, phosphorylated on Thr-32 and Ser-253 by AKT1/PKB. This phosphorylated form then interacts with 14-3-3 proteins and is retained in the cytoplasm. Survival factor withdrawal induces dephosphorylation and promotes translocation to the nucleus where the dephosphorylated protein induces transcription of target genes and triggers apoptosis. Although AKT1/PKB doesn't appear to phosphorylate Ser-315 directly, it may activate other kinases that trigger phosphorylation at this residue. Phosphorylated by STK4/MST1 on Ser-209 upon oxidative stress, which leads to dissociation from YWHAB/14-3-3-beta and nuclear translocation. Phosphorylated by PIM1. Phosphorylation by AMPK leads to the activation of transcriptional activity without affecting subcellular localization. In response to metabolic stress, phosphorylated by AMPK on Ser-30 which mediates FOXO3 mitochondrial translocation. Phosphorylation by MAPKAPK5 promotes nuclear localization and DNA-binding, leading to induction of miR-34b and miR-34c expression, 2 post-transcriptional regulators of MYC that bind to the 3'UTR of MYC transcript and prevent its translation. Phosphorylated by CHUK/IKKA and IKBKB/IKKB. TNF-induced inactivation of FOXO3 requires its phosphorylation at Ser-644 by IKBKB/IKKB which promotes FOXO3 retention in the cytoplasm, polyubiquitination and ubiquitin-mediated proteasomal degradation. May be dephosphorylated by calcineurin A on Ser-299 which abolishes FOXO3 transcriptional activity. In cancer cells, ERK mediated-phosphorylation of Ser-12 is required for mitochondrial translocation of FOXO3 in response to metabolic stress or chemotherapeutic agents. Phosphorylation at Ser-253 promotes its degradation by the proteasome. Dephosphorylation at Ser-253 by protein phosphatase 2A (PPP2CA) promotes its stabilization; interaction with PPP2CA is enhanced by AMBRA1. Post-translationally, deacetylation by SIRT1 or SIRT2 stimulates interaction of FOXO3 with SKP2 and facilitates SCF(SKP2)-mediated FOXO3 ubiquitination and proteasomal degradation. Deacetylation by SIRT2 stimulates FOXO3-mediated transcriptional activity in response to oxidative stress. Deacetylated by SIRT3. Deacetylation by SIRT3 stimulates FOXO3-mediated mtDNA transcriptional activity in response to metabolic stress. Heavily methylated by SET9 which decreases stability, while moderately increasing transcriptional activity. The main methylation site is Lys-271. Methylation doesn't affect subcellular location. In terms of processing, polyubiquitinated. Ubiquitinated by a SCF complex containing SKP2, leading to proteasomal degradation. Post-translationally, the N-terminus is cleaved following import into the mitochondrion. Ubiquitous.

The protein localises to the cytoplasm. Its subcellular location is the cytosol. It localises to the nucleus. It is found in the mitochondrion matrix. The protein resides in the mitochondrion outer membrane. Transcriptional activator that recognizes and binds to the DNA sequence 5'-[AG]TAAA[TC]A-3' and regulates different processes, such as apoptosis and autophagy. Acts as a positive regulator of autophagy in skeletal muscle: in starved cells, enters the nucleus following dephosphorylation and binds the promoters of autophagy genes, such as GABARAP1L, MAP1LC3B and ATG12, thereby activating their expression, resulting in proteolysis of skeletal muscle proteins. Triggers apoptosis in the absence of survival factors, including neuronal cell death upon oxidative stress. Participates in post-transcriptional regulation of MYC: following phosphorylation by MAPKAPK5, promotes induction of miR-34b and miR-34c expression, 2 post-transcriptional regulators of MYC that bind to the 3'UTR of MYC transcript and prevent its translation. In response to metabolic stress, translocates into the mitochondria where it promotes mtDNA transcription. In response to metabolic stress, translocates into the mitochondria where it promotes mtDNA transcription. Also acts as a key regulator of chondrogenic commitment of skeletal progenitor cells in response to lipid availability: when lipids levels are low, translocates to the nucleus and promotes expression of SOX9, which induces chondrogenic commitment and suppresses fatty acid oxidation. Also acts as a key regulator of regulatory T-cells (Treg) differentiation by activating expression of FOXP3. The sequence is that of Forkhead box protein O3 from Homo sapiens (Human).